Reading from the N-terminus, the 415-residue chain is Packaging protein 3 (415 aa).

2 disordered regions span residues 1–56 and 66–85; these read MHPV…RRRA and EGLARLGAPSPERHPRVQLK. The segment at 1–173 is interaction with packaging protein 1; that stretch reads MHPVLRQMRP…VNQEINFQKS (173 aa). Low complexity predominate over residues 31–46; sequence PTASGGATSAADAAAD. A Phosphoserine; by host modification is found at S75. Positions 76 to 85 are enriched in basic and acidic residues; the sequence is PERHPRVQLK. Position 360 is a phosphoserine; by host (S360). Over residues 381 to 394 the composition is skewed to low complexity; sequence GAGPGLAVAPARAG. Residues 381-415 are disordered; it reads GAGPGLAVAPARAGNVGGVEEYDEDDEYEPEDGEY. Residues 400–415 are compositionally biased toward acidic residues; it reads EEYDEDDEYEPEDGEY.

This sequence belongs to the adenoviridae packaging protein 3 family. Part of the genome packaging complex composed of packaging proteins 1, 2 and 3; this complex specifically binds to the packaging sequence on the left end of viral genomic DNA and performs packaging of the viral genome. Interacts with hexon-linking protein IIIa; this interaction is required to promote correct genome packaging. In terms of processing, cleaved at different sites by the viral protease during virion maturation.

The protein localises to the host nucleus. Its function is as follows. Involved in viral genome packaging through its interaction with packaging proteins 1 and 2. After proteolytic cleavage by adenovirus protease, L1 52/55k protein is removed from the capsid during viral maturation. This chain is Packaging protein 3, found in Human adenovirus C serotype 2 (HAdV-2).